The following is a 153-amino-acid chain: Phosphatase NudJ (153 aa).

A Nudix hydrolase domain is found at 3–131 (KPHVTVACVV…LVAESIRCYQ (129 aa)). Residues 36 to 57 (GHLEADETLVEAAARELWEETG) carry the Nudix box motif.

It belongs to the Nudix hydrolase family. NudJ subfamily. As to quaternary structure, monomer. Mg(2+) serves as cofactor.

This Shigella boydii serotype 4 (strain Sb227) protein is Phosphatase NudJ (nudJ).